A 517-amino-acid chain; its full sequence is Cell division cycle protein 73 (517 aa).

The span at 124–135 (SEPEAKKPRLDG) shows a compositional bias: basic and acidic residues. Disordered regions lie at residues 124–159 (SEPE…SAAK) and 306–326 (GHHA…LAKP). The span at 315–324 (DAPPGRPPLA) shows a compositional bias: pro residues.

It belongs to the CDC73 family. As to quaternary structure, component of the PAF1 complex which consists of at least cdc-73, ctr-9, leo-1, pafo-1 and rtfo-1.

The protein resides in the nucleus. Component of the PAF1 complex which is a multifunctional complex involved in transcription initiation via genetic interactions with TATA-binding proteins, elongation and transcription-coupled histone modification. The chain is Cell division cycle protein 73 from Caenorhabditis elegans.